We begin with the raw amino-acid sequence, 43 residues long: MDSATVLSIGIAVVVIAVTGFSIYTAFGPPSVELEDPFEDHED.

The chain crosses the membrane as a helical span at residues 7-27; it reads LSIGIAVVVIAVTGFSIYTAF.

This sequence belongs to the PsbN family.

Its subcellular location is the cellular thylakoid membrane. May play a role in photosystem I and II biogenesis. The polypeptide is Protein PsbN (Picosynechococcus sp. (strain ATCC 27264 / PCC 7002 / PR-6) (Agmenellum quadruplicatum)).